The following is a 313-amino-acid chain: uncharacterized protein (313 aa).

29-61 (ALVTGGGTGLGKAIATTFAHLGASVAIAARRLD) provides a ligand contact to NADP(+).

This sequence belongs to the short-chain dehydrogenases/reductases (SDR) family. 2,4-dienoyl-CoA reductase subfamily.

This is an uncharacterized protein from Caenorhabditis elegans.